Reading from the N-terminus, the 176-residue chain is NAD(P)H-quinone oxidoreductase subunit 6, chloroplastic (176 aa).

Transmembrane regions (helical) follow at residues 10 to 30, 33 to 53, 60 to 80, 95 to 115, and 152 to 172; these read ILVL…VLLT, IYSA…YFLL, VAQL…AVMF, IGDG…MTTI, and FYLP…GAIT.

Belongs to the complex I subunit 6 family. In terms of assembly, NDH is composed of at least 16 different subunits, 5 of which are encoded in the nucleus.

Its subcellular location is the plastid. It is found in the chloroplast thylakoid membrane. It catalyses the reaction a plastoquinone + NADH + (n+1) H(+)(in) = a plastoquinol + NAD(+) + n H(+)(out). It carries out the reaction a plastoquinone + NADPH + (n+1) H(+)(in) = a plastoquinol + NADP(+) + n H(+)(out). Functionally, NDH shuttles electrons from NAD(P)H:plastoquinone, via FMN and iron-sulfur (Fe-S) centers, to quinones in the photosynthetic chain and possibly in a chloroplast respiratory chain. The immediate electron acceptor for the enzyme in this species is believed to be plastoquinone. Couples the redox reaction to proton translocation, and thus conserves the redox energy in a proton gradient. In Zea mays (Maize), this protein is NAD(P)H-quinone oxidoreductase subunit 6, chloroplastic (ndhG).